The primary structure comprises 57 residues: Somatostatin-2 (57 aa).

A disordered region spans residues glycine 1–arginine 26.

The protein belongs to the somatostatin family.

Its subcellular location is the secreted. In terms of biological role, somatostatin inhibits the release of somatotropin. The protein is Somatostatin-2 (sst2) of Piaractus mesopotamicus (Small-scaled pacu).